The following is a 573-amino-acid chain: Urease subunit alpha 2 (573 aa).

Residues G135–S573 form the Urease domain. Positions 140, 142, and 223 each coordinate Ni(2+). Position 223 is an N6-carboxylysine (K223). H225 is a substrate binding site. Residues H252 and H278 each contribute to the Ni(2+) site. Catalysis depends on H326, which acts as the Proton donor. A Ni(2+)-binding site is contributed by D366.

Belongs to the metallo-dependent hydrolases superfamily. Urease alpha subunit family. Heterotrimer of UreA (gamma), UreB (beta) and UreC (alpha) subunits. Three heterotrimers associate to form the active enzyme. Ni cation serves as cofactor. In terms of processing, carboxylation allows a single lysine to coordinate two nickel ions.

It is found in the cytoplasm. It catalyses the reaction urea + 2 H2O + H(+) = hydrogencarbonate + 2 NH4(+). Its pathway is nitrogen metabolism; urea degradation; CO(2) and NH(3) from urea (urease route): step 1/1. In terms of biological role, disrupting the ure2 operon has no effect on urease activity, or pathogen survival in BALB/c mice when inoculated by gavage, but confers slightly enhanced resistance to low pH killing in vitro. In Brucella suis biovar 1 (strain 1330), this protein is Urease subunit alpha 2.